The following is a 415-amino-acid chain: Na(+)-translocating NADH-quinone reductase subunit B (415 aa).

4 consecutive transmembrane segments (helical) span residues 23–40 (WFAL…PGLV), 56–76 (IMIM…YNAG), 129–149 (FLPI…LFCM), and 164–184 (ILFA…LGIT). T236 carries the post-translational modification FMN phosphoryl threonine. Transmembrane regions (helical) follow at residues 275-295 (VSTL…IASW), 297-317 (IIGG…VIGS), 325-345 (MPWH…FMAT), 358-378 (WAYG…NPAY), and 381-401 (GMML…HVVV).

It belongs to the NqrB/RnfD family. As to quaternary structure, composed of six subunits; NqrA, NqrB, NqrC, NqrD, NqrE and NqrF. Riboflavin serves as cofactor. It depends on FMN as a cofactor.

It localises to the cell inner membrane. It carries out the reaction a ubiquinone + n Na(+)(in) + NADH + H(+) = a ubiquinol + n Na(+)(out) + NAD(+). In terms of biological role, NQR complex catalyzes the reduction of ubiquinone-1 to ubiquinol by two successive reactions, coupled with the transport of Na(+) ions from the cytoplasm to the periplasm. NqrA to NqrE are probably involved in the second step, the conversion of ubisemiquinone to ubiquinol. The chain is Na(+)-translocating NADH-quinone reductase subunit B from Vibrio cholerae serotype O1 (strain ATCC 39541 / Classical Ogawa 395 / O395).